The chain runs to 273 residues: MRLYRAQALVLRSRSYGEADRLLTLLTRERGKLSAIAKGVRKPTSRLRAGTQPLTHSQLVLYEGKNLQTVTQAEPVESFAALHGDVVRFSHASSMAELVDRLSPDHSGADLFPLLLTGWHLLSVFPGDLVACLFQLRLLDRLGYCPELSLCLDCGEPVEIADSGPWPAYSPEMGGLVGNCCRHRHSEMGLIAPGALALLRHLLQMDPRDLGRLRVGPKLLRHVSAVLKETIRCRSEGNMRSWSVIESVGRSLTEEPELKAEQTEAEKESQRPR.

Residues 249 to 273 (GRSLTEEPELKAEQTEAEKESQRPR) are disordered. The segment covering 252–273 (LTEEPELKAEQTEAEKESQRPR) has biased composition (basic and acidic residues).

Belongs to the RecO family.

In terms of biological role, involved in DNA repair and RecF pathway recombination. This is DNA repair protein RecO from Heliobacterium modesticaldum (strain ATCC 51547 / Ice1).